A 168-amino-acid chain; its full sequence is SsrA-binding protein (168 aa).

Positions 1–20 (MAAQSKQAKPSGKQGGKKII) are disordered.

It belongs to the SmpB family.

It localises to the cytoplasm. Its function is as follows. Required for rescue of stalled ribosomes mediated by trans-translation. Binds to transfer-messenger RNA (tmRNA), required for stable association of tmRNA with ribosomes. tmRNA and SmpB together mimic tRNA shape, replacing the anticodon stem-loop with SmpB. tmRNA is encoded by the ssrA gene; the 2 termini fold to resemble tRNA(Ala) and it encodes a 'tag peptide', a short internal open reading frame. During trans-translation Ala-aminoacylated tmRNA acts like a tRNA, entering the A-site of stalled ribosomes, displacing the stalled mRNA. The ribosome then switches to translate the ORF on the tmRNA; the nascent peptide is terminated with the 'tag peptide' encoded by the tmRNA and targeted for degradation. The ribosome is freed to recommence translation, which seems to be the essential function of trans-translation. This Mycobacterium ulcerans (strain Agy99) protein is SsrA-binding protein.